The following is a 59-amino-acid chain: UPF0337 protein MM_2677 (59 aa).

Basic and acidic residues-rich tracts occupy residues 1 to 24 (MKEGTKEEMEGKFSKAKGEIKESA) and 33 to 59 (MEAKGEAEKRKGEAQEKVGKIRKEFEK). A disordered region spans residues 1–59 (MKEGTKEEMEGKFSKAKGEIKESAGEMTGDIEMEAKGEAEKRKGEAQEKVGKIRKEFEK).

This sequence belongs to the UPF0337 (CsbD) family.

The polypeptide is UPF0337 protein MM_2677 (Methanosarcina mazei (strain ATCC BAA-159 / DSM 3647 / Goe1 / Go1 / JCM 11833 / OCM 88) (Methanosarcina frisia)).